Here is an 85-residue protein sequence, read N- to C-terminus: Large ribosomal subunit protein bL27 (85 aa).

A disordered region spans residues 1 to 20 (MAHKKAGGSTRNGRDSEAKR).

This sequence belongs to the bacterial ribosomal protein bL27 family.

The sequence is that of Large ribosomal subunit protein bL27 from Salmonella agona (strain SL483).